The following is a 147-amino-acid chain: Histidine-containing phosphotransfer protein 1 (147 aa).

Residues 38–133 (APDFVSEVVT…YDLRNKFQAM (96 aa)) enclose the HPt domain. A Phosphohistidine modification is found at His-79.

Post-translationally, two-component system major event consists of a His-to-Asp phosphorelay between a sensor histidine kinase (HK) and a response regulator (RR). In plants, the His-to-Asp phosphorelay involves an additional intermediate named Histidine-containing phosphotransfer protein (HPt). This multistep phosphorelay consists of a His-Asp-His-Asp sequential transfer of a phosphate group between first a His and an Asp of the HK protein, followed by the transfer to a conserved His of the HPt protein and finally the transfer to an Asp in the receiver domain of the RR protein. As to expression, widely expressed.

It localises to the cytoplasm. Its subcellular location is the cytosol. The protein localises to the nucleus. Functions as a two-component phosphorelay mediators between cytokinin sensor histidine kinases and response regulators (B-type ARRs). Plays an important role in propagating cytokinin signal transduction through the multistep His-to-Asp phosphorelay. Functions as a positive regulator of the cytokinin signaling pathway. May play a regulatory role in salt and drought tolerance during plant development. The sequence is that of Histidine-containing phosphotransfer protein 1 from Oryza sativa subsp. japonica (Rice).